The chain runs to 295 residues: Lipoyl synthase (295 aa).

Residues Cys-34, Cys-39, Cys-45, Cys-60, Cys-64, Cys-67, and Ser-273 each contribute to the [4Fe-4S] cluster site. The 217-residue stretch at 46–262 folds into the Radical SAM core domain; that stretch reads WNKRHATIMI…KLMAYAKGFS (217 aa).

This sequence belongs to the radical SAM superfamily. Lipoyl synthase family. The cofactor is [4Fe-4S] cluster.

It is found in the cytoplasm. The catalysed reaction is [[Fe-S] cluster scaffold protein carrying a second [4Fe-4S](2+) cluster] + N(6)-octanoyl-L-lysyl-[protein] + 2 oxidized [2Fe-2S]-[ferredoxin] + 2 S-adenosyl-L-methionine + 4 H(+) = [[Fe-S] cluster scaffold protein] + N(6)-[(R)-dihydrolipoyl]-L-lysyl-[protein] + 4 Fe(3+) + 2 hydrogen sulfide + 2 5'-deoxyadenosine + 2 L-methionine + 2 reduced [2Fe-2S]-[ferredoxin]. It functions in the pathway protein modification; protein lipoylation via endogenous pathway; protein N(6)-(lipoyl)lysine from octanoyl-[acyl-carrier-protein]: step 2/2. In terms of biological role, catalyzes the radical-mediated insertion of two sulfur atoms into the C-6 and C-8 positions of the octanoyl moiety bound to the lipoyl domains of lipoate-dependent enzymes, thereby converting the octanoylated domains into lipoylated derivatives. This chain is Lipoyl synthase, found in Anaplasma marginale (strain St. Maries).